Here is a 352-residue protein sequence, read N- to C-terminus: Sperm equatorial segment protein 1 (352 aa).

A signal peptide spans 1-19 (MKSLVLLVALLLWSSSVPA). The N-linked (GlcNAc...) asparagine glycan is linked to asparagine 128. A disordered region spans residues 140 to 203 (IEKEEPEPEP…TESEDVPQLS (64 aa)). Residues 166-193 (TESSTSPYVTSYKSPVTTSDRSTGIEIS) are compositionally biased toward polar residues.

The protein belongs to the SPESP1 family. Post-translationally, glycosylated. In testis there are two predominant forms of 77- and 67-kDa and a form of 47-kDa, whereas in epididymal sperm from caput, corpus, and cauda there are two forms of 47- and 43-kDa. Testis forms contain complex carbohydrate residues. Epididymal sperm forms are N-glycosylated. Then undergoes significant glycosylation in the testis and that the majority of these glycoconjugates are removed by the time sperm reach the caput epididymis.

It localises to the cytoplasmic vesicle. Its subcellular location is the secretory vesicle. It is found in the acrosome. In terms of biological role, involved in fertilization ability of sperm. The chain is Sperm equatorial segment protein 1 from Macaca fascicularis (Crab-eating macaque).